Reading from the N-terminus, the 99-residue chain is Seminal vesicle secretory protein 6 (99 aa).

Positions 1-21 (MSPTSFFLLTMLLVLVTETAA) are cleaved as a signal peptide.

It belongs to the SVP2/SVP5/SVP6 family. In terms of tissue distribution, testis.

It is found in the secreted. The protein resides in the extracellular space. The polypeptide is Seminal vesicle secretory protein 6 (Svs6) (Mus musculus (Mouse)).